The following is a 369-amino-acid chain: Anhydro-N-acetylmuramic acid kinase (369 aa).

Residue 12-19 coordinates ATP; sequence GTSLDGVD.

This sequence belongs to the anhydro-N-acetylmuramic acid kinase family.

It carries out the reaction 1,6-anhydro-N-acetyl-beta-muramate + ATP + H2O = N-acetyl-D-muramate 6-phosphate + ADP + H(+). It participates in amino-sugar metabolism; 1,6-anhydro-N-acetylmuramate degradation. Its pathway is cell wall biogenesis; peptidoglycan recycling. Its function is as follows. Catalyzes the specific phosphorylation of 1,6-anhydro-N-acetylmuramic acid (anhMurNAc) with the simultaneous cleavage of the 1,6-anhydro ring, generating MurNAc-6-P. Is required for the utilization of anhMurNAc either imported from the medium or derived from its own cell wall murein, and thus plays a role in cell wall recycling. The polypeptide is Anhydro-N-acetylmuramic acid kinase (Escherichia coli O45:K1 (strain S88 / ExPEC)).